Consider the following 765-residue polypeptide: MSEEPRFDTVAKAAATPDLPQPYTELGMKDEEYARVREILGRRPTSAELAIYSVMWSEHCSYKSSKVHLRQFGEKAPDTDVLLVGIGENAGVVDVGDGYAVTFKIESHNHPSYVEPHQGAATGVGGIVRDILSMGARPVAVMDSLRFGPADAPDTQRVLPGVVSGISSYGNCLGLPNIGGEVGFDAGYASNPLVNALCVGVLKHENIKLAQASGPGNHVVLFGAATGPDGIGGASVLASASFDEESQAKRPSVQVGDPFLEKLLIECCMELYAKDLVVGIQDLGAAGVSCATTELAAGGTGGMRIELDRVPLRDPRLTPEEILMSESQERMMAIVEPDKLDEFLAVCAKWDILASVIGEVTDVTPEEEARGGRLVMTWRGETIVDLPPRTAADQGPVYHRPIERPADQDALLADDPAALPRPSSDEELRDQVLRVLAAPGICDSSWITDQYDRYVMGNTVLAMPHDSGMIRIAEDTDRGVALATDGNGRYTRLDPYVGTQLAYAEAYRNVAATGARPLAVTNCLNFGSPEDPGVMWQFAEATRGLADACQALGTPVTGGNVSFYNQTGSTAINPTPVIGVLGVIDDVHKRVTSAFSAEGESVVFLLGETRLELGGSAWADVIHGHLGGRPPQIDLDAEAALGRVLIDGAAAELLVSAHDLSDGGLAVALAESCLRGGVGCEVDLGDDAFTALFSESAARAVVSVRPEHETALVDLCAKHGVPVRRLGTVGGSALTMVHRTGRISIEVAELRDAYESTLPALFGNK.

H59 is a catalytic residue. Positions 62 and 104 each coordinate ATP. E106 contributes to the Mg(2+) binding site. Substrate-binding positions include 107 to 110 (SHNH) and R129. The active-site Proton acceptor is H108. D130 lines the Mg(2+) pocket. Q254 contributes to the substrate binding site. D282 serves as a coordination point for Mg(2+). 326 to 328 (ESQ) is a binding site for substrate. The ATP site is built by N522 and G559. N560 contacts Mg(2+). Substrate is bound at residue S562.

Belongs to the FGAMS family. In terms of assembly, monomer. Part of the FGAM synthase complex composed of 1 PurL, 1 PurQ and 2 PurS subunits.

It localises to the cytoplasm. It catalyses the reaction N(2)-formyl-N(1)-(5-phospho-beta-D-ribosyl)glycinamide + L-glutamine + ATP + H2O = 2-formamido-N(1)-(5-O-phospho-beta-D-ribosyl)acetamidine + L-glutamate + ADP + phosphate + H(+). Its pathway is purine metabolism; IMP biosynthesis via de novo pathway; 5-amino-1-(5-phospho-D-ribosyl)imidazole from N(2)-formyl-N(1)-(5-phospho-D-ribosyl)glycinamide: step 1/2. Part of the phosphoribosylformylglycinamidine synthase complex involved in the purines biosynthetic pathway. Catalyzes the ATP-dependent conversion of formylglycinamide ribonucleotide (FGAR) and glutamine to yield formylglycinamidine ribonucleotide (FGAM) and glutamate. The FGAM synthase complex is composed of three subunits. PurQ produces an ammonia molecule by converting glutamine to glutamate. PurL transfers the ammonia molecule to FGAR to form FGAM in an ATP-dependent manner. PurS interacts with PurQ and PurL and is thought to assist in the transfer of the ammonia molecule from PurQ to PurL. In Thermobifida fusca (strain YX), this protein is Phosphoribosylformylglycinamidine synthase subunit PurL.